A 288-amino-acid polypeptide reads, in one-letter code: 18S rRNA aminocarboxypropyltransferase (288 aa).

S-adenosyl-L-methionine-binding residues include Ser-43, Val-91, Leu-114, and Trp-129. Polar residues predominate over residues 209–221 (IWSAGNLNHKPTL). The interval 209 to 267 (IWSAGNLNHKPTLNTSSTHSNSEESRSPLHEPSEASLAHDEHSIPTDDNEETLTNLQAN) is disordered. Residues 229–253 (NSEESRSPLHEPSEASLAHDEHSIP) are compositionally biased toward basic and acidic residues.

Belongs to the TDD superfamily. TSR3 family.

It is found in the cytoplasm. The protein resides in the nucleus. It carries out the reaction an N(1)-methylpseudouridine in rRNA + S-adenosyl-L-methionine = N(1)-methyl-N(3)-[(3S)-3-amino-3-carboxypropyl]pseudouridine in rRNA + S-methyl-5'-thioadenosine + H(+). The enzyme catalyses N(1)-methylpseudouridine(1191) in yeast 18S rRNA + S-adenosyl-L-methionine = N(1)-methyl-N(3)-[(3S)-3-amino-3-carboxypropyl]pseudouridine(1191) in yeast 18S rRNA + S-methyl-5'-thioadenosine + H(+). In terms of biological role, aminocarboxypropyltransferase that catalyzes the aminocarboxypropyl transfer on pseudouridine at position 1191 (Psi1191) in 18S rRNA. It constitutes the last step in biosynthesis of the hypermodified N1-methyl-N3-(3-amino-3-carboxypropyl) pseudouridine (m1acp3-Psi) conserved in eukaryotic 18S rRNA. Required for processing 35S pre-rRNA at site D. The protein is 18S rRNA aminocarboxypropyltransferase of Schizosaccharomyces pombe (strain 972 / ATCC 24843) (Fission yeast).